Reading from the N-terminus, the 247-residue chain is Cell division protein ZapD (247 aa).

The protein belongs to the ZapD family. Interacts with FtsZ.

The protein resides in the cytoplasm. Cell division factor that enhances FtsZ-ring assembly. Directly interacts with FtsZ and promotes bundling of FtsZ protofilaments, with a reduction in FtsZ GTPase activity. This is Cell division protein ZapD from Enterobacter sp. (strain 638).